Consider the following 387-residue polypeptide: Protein RecA (387 aa).

Residue 80-87 (GPESSGKT) participates in ATP binding. Positions 348–387 (LDDSEVAETEEETTASKTKAKAKKEEKAVETEEIELELED) are disordered. 2 stretches are compositionally biased toward acidic residues: residues 349-360 (DDSEVAETEEET) and 378-387 (TEEIELELED).

It belongs to the RecA family.

The protein resides in the cytoplasm. Its function is as follows. Can catalyze the hydrolysis of ATP in the presence of single-stranded DNA, the ATP-dependent uptake of single-stranded DNA by duplex DNA, and the ATP-dependent hybridization of homologous single-stranded DNAs. It interacts with LexA causing its activation and leading to its autocatalytic cleavage. The chain is Protein RecA from Lactococcus lactis subsp. cremoris (strain MG1363).